The sequence spans 315 residues: Zinc transport protein ZntB (315 aa).

The Cytoplasmic portion of the chain corresponds to 1–250 (MGFMIEHWDF…RDEKTNKNSY (250 aa)). Residues 251 to 271 (LFTLVATIFLPTSFLTGLLGI) form a helical membrane-spanning segment. The Periplasmic portion of the chain corresponds to 272–282 (NIGGMPGVESS). Residues 283-303 (MAFTWFCIALIVIFGLEWLLF) form a helical membrane-spanning segment. At 304-315 (KRLGFTNKTDDE) the chain is on the cytoplasmic side.

This sequence belongs to the CorA metal ion transporter (MIT) (TC 1.A.35) family. As to quaternary structure, homopentamer. Can assemble pentamers in the absence of the transmembrane regions.

It localises to the cell inner membrane. The catalysed reaction is Zn(2+)(out) + H(+)(out) = Zn(2+)(in) + H(+)(in). Functionally, zinc transporter. Acts as a Zn(2+):proton symporter, which likely mediates zinc ion uptake. In Vibrio parahaemolyticus serotype O3:K6 (strain RIMD 2210633), this protein is Zinc transport protein ZntB.